The primary structure comprises 276 residues: Undecaprenyl-diphosphatase (276 aa).

5 helical membrane-spanning segments follow: residues 84–104 (YRLG…GLLF), 115–135 (LWVV…AEYL), 188–208 (FGFL…LPDA), 222–242 (QLLV…SWFL), and 250–270 (MYWF…LLAT).

It belongs to the UppP family.

It localises to the cell membrane. It carries out the reaction di-trans,octa-cis-undecaprenyl diphosphate + H2O = di-trans,octa-cis-undecaprenyl phosphate + phosphate + H(+). In terms of biological role, catalyzes the dephosphorylation of undecaprenyl diphosphate (UPP). Confers resistance to bacitracin. This chain is Undecaprenyl-diphosphatase, found in Mycobacterium ulcerans (strain Agy99).